A 475-amino-acid polypeptide reads, in one-letter code: SAM50-like protein SPAC17C9.06 (475 aa).

One can recognise a POTRA domain in the interval 44 to 130; that stretch reads VGISSIRVTG…LDVTIQVKEK (87 aa).

This sequence belongs to the SAM50/omp85 family. In terms of assembly, associates with the mitochondrial contact site and cristae organizing system (MICOS) complex (also known as MINOS or MitOS complex).

It is found in the mitochondrion outer membrane. In terms of biological role, may be required for the assembly pathway of mitochondrial outer membrane proteins. This chain is SAM50-like protein SPAC17C9.06, found in Schizosaccharomyces pombe (strain 972 / ATCC 24843) (Fission yeast).